The following is a 382-amino-acid chain: Lipid-A-disaccharide synthase (382 aa).

This sequence belongs to the LpxB family.

The enzyme catalyses 2-N,3-O-bis[(3R)-3-hydroxytetradecanoyl]-alpha-D-glucosaminyl 1-phosphate + UDP-2-N,3-O-bis[(3R)-3-hydroxytetradecanoyl]-alpha-D-glucosamine = lipid A disaccharide (E. coli) + UDP + H(+). It catalyses the reaction a lipid X + a UDP-2-N,3-O-bis[(3R)-3-hydroxyacyl]-alpha-D-glucosamine = a lipid A disaccharide + UDP + H(+). It participates in glycolipid biosynthesis; lipid IV(A) biosynthesis; lipid IV(A) from (3R)-3-hydroxytetradecanoyl-[acyl-carrier-protein] and UDP-N-acetyl-alpha-D-glucosamine: step 5/6. In terms of biological role, condensation of UDP-2,3-diacylglucosamine and 2,3-diacylglucosamine-1-phosphate to form lipid A disaccharide, a precursor of lipid A, a phosphorylated glycolipid that anchors the lipopolysaccharide to the outer membrane of the cell. The sequence is that of Lipid-A-disaccharide synthase from Enterobacter sp. (strain 638).